The sequence spans 401 residues: Mu-type opioid receptor (401 aa).

Over 1 to 69 the chain is Extracellular; that stretch reads MDSSADPRNA…CPPTGSPSMV (69 aa). N-linked (GlcNAc...) asparagine glycans are attached at residues Asn-9, Asn-12, Asn-34, Asn-41, and Asn-49. The helical transmembrane segment at 70 to 94 threads the bilayer; the sequence is TAITIMALYSIVCVVGLFGNFLVMY. Residues 95–107 are Cytoplasmic-facing; it reads VIVRYTKMKTATN. A helical membrane pass occupies residues 108 to 132; it reads IYIFNLALADALATSTLPFQSVNYL. The Extracellular portion of the chain corresponds to 133–143; that stretch reads MGTWPFGTILC. A disulfide bridge links Cys-143 with Cys-220. A helical transmembrane segment spans residues 144-166; that stretch reads KIVISIDYYNMFTSIFTLCTMSV. Topologically, residues 167–186 are cytoplasmic; it reads DRYIAVCHPVKALDFRTPRN. Phosphotyrosine is present on Tyr-169. Residues 187–208 traverse the membrane as a helical segment; that stretch reads AKIINVCNWILSSAIGLPVMFM. Topologically, residues 209–231 are extracellular; that stretch reads ATTKYRNGSIDCALTFSHPTWYW. The helical transmembrane segment at 232–256 threads the bilayer; that stretch reads ENLLKICVFIFAFIMPVLIITVCYG. Residues 257–280 lie on the Cytoplasmic side of the membrane; the sequence is LMILRLKSVRMLSGSKEKDRNLRR. The chain crosses the membrane as a helical span at residues 281–307; it reads ITRMVLVVVAVFIVCWTPIHIYVIIKA. At 308–315 the chain is on the extracellular side; sequence LITIPETT. Residues 316–339 traverse the membrane as a helical segment; that stretch reads FQTVSWHFCIALGYTNSCLNPVLY. The NPxxY; plays a role in stabilizing the activated conformation of the receptor motif lies at 335–339; the sequence is NPVLY. The Cytoplasmic portion of the chain corresponds to 340 to 401; the sequence is AFLDENFKRC…NLEAETAPLP (62 aa). Cys-354 carries the S-palmitoyl cysteine lipid modification. Residues 365 to 385 form a disordered region; that stretch reads NSARIRQNTRDHPSTANTVDR. Ser-366 carries the phosphoserine modification. Thr-373 is modified (phosphothreonine). Ser-378 carries the phosphoserine modification. Thr-397 carries the phosphothreonine modification.

This sequence belongs to the G-protein coupled receptor 1 family. Forms homooligomers and heterooligomers with other GPCRs, such as OPRD1, OPRK1, OPRL1, NPFFR2, ADRA2A, SSTR2, CNR1 and CCR5 (probably in dimeric forms). Interacts with heterotrimeric G proteins; interaction with a heterotrimeric complex containing GNAI1, GNB1 and GNG2 stabilizes the active conformation of the receptor and increases its affinity for endomorphin-2, the synthetic opioid peptide DAMGO and for morphinan agonists. Interacts with PPL; the interaction disrupts agonist-mediated G-protein activation. Interacts (via C-terminus) with DNAJB4 (via C-terminus). Interacts with calmodulin; the interaction inhibits the constitutive activity of OPRM1; it abolishes basal and attenuates agonist-stimulated G-protein coupling. Interacts with FLNA, PLD2, RANBP9 and WLS and GPM6A. Interacts with RTP4. Interacts with SYP and GNAS. Interacts with RGS9, RGS17, RGS20, RGS4, PPP1R9B and HINT1. In terms of processing, phosphorylated. Differentially phosphorylated in basal and agonist-induced conditions. Agonist-mediated phosphorylation modulates receptor internalization. Phosphorylated by GRK2 in a agonist-dependent manner. Phosphorylation at Tyr-169 requires receptor activation, is dependent on non-receptor protein tyrosine kinase Src and results in a decrease in agonist efficacy by reducing G-protein coupling efficiency. Phosphorylated on tyrosine residues; the phosphorylation is involved in agonist-induced G-protein-independent receptor down-regulation. Phosphorylation at Ser-378 is involved in G-protein-dependent but not beta-arrestin-dependent activation of the ERK pathway. Ubiquitinated. A basal ubiquitination seems not to be related to degradation. Ubiquitination is increased upon formation of OPRM1:OPRD1 oligomers leading to proteasomal degradation; the ubiquitination is diminished by RTP4.

It is found in the cell membrane. The protein localises to the cell projection. Its subcellular location is the axon. It localises to the perikaryon. The protein resides in the dendrite. It is found in the endosome. In terms of biological role, receptor for endogenous opioids such as beta-endorphin and endomorphin. Receptor for natural and synthetic opioids including morphine, heroin, DAMGO, fentanyl, etorphine, buprenorphin and methadone. Also activated by enkephalin peptides, such as Met-enkephalin or Met-enkephalin-Arg-Phe, with higher affinity for Met-enkephalin-Arg-Phe. Agonist binding to the receptor induces coupling to an inactive GDP-bound heterotrimeric G-protein complex and subsequent exchange of GDP for GTP in the G-protein alpha subunit leading to dissociation of the G-protein complex with the free GTP-bound G-protein alpha and the G-protein beta-gamma dimer activating downstream cellular effectors. The agonist- and cell type-specific activity is predominantly coupled to pertussis toxin-sensitive G(i) and G(o) G alpha proteins, GNAI1, GNAI2, GNAI3 and GNAO1, and to a lesser extent to pertussis toxin-insensitive G alpha proteins GNAZ and GNA15. They mediate an array of downstream cellular responses, including inhibition of adenylate cyclase activity and both N-type and L-type calcium channels, activation of inward rectifying potassium channels, mitogen-activated protein kinase (MAPK), phospholipase C (PLC), phosphoinositide/protein kinase (PKC), phosphoinositide 3-kinase (PI3K) and regulation of NF-kappa-B. Also couples to adenylate cyclase stimulatory G alpha proteins. The selective temporal coupling to G-proteins and subsequent signaling can be regulated by RGSZ proteins, such as RGS9, RGS17 and RGS4. Phosphorylation by members of the GPRK subfamily of Ser/Thr protein kinases and association with beta-arrestins is involved in short-term receptor desensitization. Beta-arrestins associate with the GPRK-phosphorylated receptor and uncouple it from the G-protein thus terminating signal transduction. The phosphorylated receptor is internalized through endocytosis via clathrin-coated pits which involves beta-arrestins. The activation of the ERK pathway occurs either in a G-protein-dependent or a beta-arrestin-dependent manner and is regulated by agonist-specific receptor phosphorylation. Acts as a class A G-protein coupled receptor (GPCR) which dissociates from beta-arrestin at or near the plasma membrane and undergoes rapid recycling. Receptor down-regulation pathways are varying with the agonist and occur dependent or independent of G-protein coupling. Endogenous ligands induce rapid desensitization, endocytosis and recycling. Heterooligomerization with other GPCRs can modulate agonist binding, signaling and trafficking properties. Involved in neurogenesis. This Sus scrofa (Pig) protein is Mu-type opioid receptor (OPRM1).